A 579-amino-acid polypeptide reads, in one-letter code: MKDSIRHLIQQALDRLTADGVLPAGLTPAIQVENTKDKSHGDFASNIAMMLAKPAGMKPRDLAEKLIAALPADAGIAKVEIAGPGFLNFFQNSDALAQRLEAALADAQLGVHKNGPAQRVVVDLSAPNLAKEMHVGHLRSTIIGDGVARVLEFLGDTVIRQNHVGDWGTQFGMLLAYMQENPAAAESELADLEGFYRAAKKRFDESPEFADRARELVVQLQAGDAECLRLWHRFNDISLSHCQALYDRLGVKLSMADVKGESAYNDDLPQVVADLAAKGLLTEDNGAQCVFMDEFKNAEGNPLPLIVQKAGGGYLYATTDLAATRYRAGVLKADRVLYFVDQRQALHFQMVFACARLAGFVPASMELEHMGFGTMNGPDGRPFKTRDGGTVKLVQLLDEAEQRAYELVKSKNPELAEDELRRIARVVGIASVKYADLSKHRASDYSFNFDLMLSFEGNTAPYLLYAYTRVAGVFRKLGKGIDEIGGRIALVAEQEQALAAKLAQFGELLASVADKGTPHMLCSYLYDLAGLFSSFYENCPILAAEDEATRDSRLRLTALTGRTLKQGLELLGLETLERM.

Residues 127-137 carry the 'HIGH' region motif; sequence PNLAKEMHVGH.

Belongs to the class-I aminoacyl-tRNA synthetase family. As to quaternary structure, monomer.

It is found in the cytoplasm. It catalyses the reaction tRNA(Arg) + L-arginine + ATP = L-arginyl-tRNA(Arg) + AMP + diphosphate. The sequence is that of Arginine--tRNA ligase from Ectopseudomonas mendocina (strain ymp) (Pseudomonas mendocina).